Consider the following 625-residue polypeptide: Pentatricopeptide repeat-containing protein At2g36980, mitochondrial (625 aa).

A mitochondrion-targeting transit peptide spans 1–7; that stretch reads MSVLVRL. 15 PPR repeats span residues 3–33, 34–68, 69–103, 104–134, 137–167, 168–202, 203–238, 239–269, 270–300, 301–335, 336–370, 371–401, 402–436, 437–471, and 473–503; these read VLVR…MPEL, DTVA…DAKP, DDYS…GFCA, SLPV…MCCD, NEVT…MPKR, VAFA…EFKP, DCYT…GWSS, AVEA…IEVL, TQVS…APEK, NIVT…GVDS, DHFA…GFQG, YAYV…IANK, DLVS…GIKP, DNVT…YRIP, and EVDH…YSSL. The segment at 512-587 is type E motif; that stretch reads SWETLLGACS…TPGCSWIEVG (76 aa). Residues 588-618 are type E(+) motif; sequence NQVSTFVVGDSSHPRLEELSETLNCLQHEMR.

This sequence belongs to the PPR family. PCMP-E subfamily.

It is found in the mitochondrion. In Arabidopsis thaliana (Mouse-ear cress), this protein is Pentatricopeptide repeat-containing protein At2g36980, mitochondrial (PCMP-E73).